The sequence spans 47 residues: Photosystem II reaction center protein K (47 aa).

A propeptide spanning residues 1–10 (MALINFDLLA) is cleaved from the precursor. A helical membrane pass occupies residues 26–46 (LPLIPLFFFLLVFVWQAAVGF).

It belongs to the PsbK family. PSII is composed of 1 copy each of membrane proteins PsbA, PsbB, PsbC, PsbD, PsbE, PsbF, PsbH, PsbI, PsbJ, PsbK, PsbL, PsbM, PsbT, PsbX, PsbY, Psb30/Ycf12, peripheral proteins PsbO, CyanoQ (PsbQ), PsbU, PsbV and a large number of cofactors. It forms dimeric complexes.

It localises to the cellular thylakoid membrane. In terms of biological role, one of the components of the core complex of photosystem II (PSII). PSII is a light-driven water:plastoquinone oxidoreductase that uses light energy to abstract electrons from H(2)O, generating O(2) and a proton gradient subsequently used for ATP formation. It consists of a core antenna complex that captures photons, and an electron transfer chain that converts photonic excitation into a charge separation. The polypeptide is Photosystem II reaction center protein K (Prochlorococcus marinus (strain NATL1A)).